A 45-amino-acid chain; its full sequence is Large ribosomal subunit protein bL34 (45 aa).

The segment at 1-27 (MTKRTLGGTSRKRKRVSGFRVRMRSHT) is disordered. Residues 10–27 (SRKRKRVSGFRVRMRSHT) are compositionally biased toward basic residues.

Belongs to the bacterial ribosomal protein bL34 family.

This Synechococcus sp. (strain CC9902) protein is Large ribosomal subunit protein bL34.